Consider the following 318-residue polypeptide: uncharacterized protein (318 aa).

This is an uncharacterized protein from Escherichia coli (strain K12).